The following is a 348-amino-acid chain: Noscapine synthase SDR1 (348 aa).

It belongs to the NAD(P)-dependent epimerase/dehydratase family.

It carries out the reaction narcotine hemiacetal + NAD(+) = noscapine + NADH + H(+). Its pathway is alkaloid biosynthesis. Functionally, oxidoreductase that catalyzes the last step in the biosynthesis of the benzylisoquinoline alkaloid noscapine. Converts narcotine hemiacetal to noscapine. This is Noscapine synthase SDR1 from Papaver somniferum (Opium poppy).